The chain runs to 470 residues: 3-isopropylmalate dehydratase large subunit (470 aa).

Positions 346, 406, and 409 each coordinate [4Fe-4S] cluster.

It belongs to the aconitase/IPM isomerase family. LeuC type 1 subfamily. Heterodimer of LeuC and LeuD. [4Fe-4S] cluster is required as a cofactor.

The catalysed reaction is (2R,3S)-3-isopropylmalate = (2S)-2-isopropylmalate. It participates in amino-acid biosynthesis; L-leucine biosynthesis; L-leucine from 3-methyl-2-oxobutanoate: step 2/4. Its function is as follows. Catalyzes the isomerization between 2-isopropylmalate and 3-isopropylmalate, via the formation of 2-isopropylmaleate. The polypeptide is 3-isopropylmalate dehydratase large subunit (Shouchella clausii (strain KSM-K16) (Alkalihalobacillus clausii)).